The following is a 401-amino-acid chain: Acetate kinase (401 aa).

A Mg(2+)-binding site is contributed by asparagine 7. Lysine 14 is a binding site for ATP. Arginine 91 is a substrate binding site. Catalysis depends on aspartate 148, which acts as the Proton donor/acceptor. ATP contacts are provided by residues 208–212, 283–285, and 332–336; these read HLGNG, DFR, and GVGEN. Glutamate 385 provides a ligand contact to Mg(2+).

It belongs to the acetokinase family. As to quaternary structure, homodimer. Mg(2+) serves as cofactor. Requires Mn(2+) as cofactor.

Its subcellular location is the cytoplasm. The enzyme catalyses acetate + ATP = acetyl phosphate + ADP. The protein operates within metabolic intermediate biosynthesis; acetyl-CoA biosynthesis; acetyl-CoA from acetate: step 1/2. Its function is as follows. Catalyzes the formation of acetyl phosphate from acetate and ATP. Can also catalyze the reverse reaction. The polypeptide is Acetate kinase (Thermoanaerobacter pseudethanolicus (strain ATCC 33223 / 39E) (Clostridium thermohydrosulfuricum)).